Here is an 884-residue protein sequence, read N- to C-terminus: MEENAQARERLPPTVTGLSPTEGVPGTQITIRGENLGNDQSDVIMLFICGIDSLWSMKWKSPSKIIARVGAASRGPGEVRIATKSGGKGSSNVKFRVFITQIGPLEESAVWVDETRTVPGREAIRSVPQIQDERDALGLLPSQKRMDQVLLSRDFPDCSGNLRMENFSPQWYLLENHADATIEDLRIAIKNMELSKQNEAKRSEEMHKANLYSLINCVDTLANLHQALEKGENADHFAALKNISKLIKDSKSKAENVFADVLKRKDDADATRNALGVIVRFKFIFFLSSKIEDSMKKGEYITILNDYTRAKSLYADTDVPLFRELMTEIDEKMQVFKEEMKRKLIDTPVSYEEQSKLIKYLKILDPESDPTWDCITSYYVWLEKSLWDMQTQFLEKAKLEDLENQQRINSQNHLITKTNELQNFVTTLVELLLSKLPSFWKLANTYHNSTASPDAIQRLEDINQMLTNIINVSSWLILNALVPKALPDMVLKQYGDQFAKWPTVPADISRSNLQLSLKTTRSLISSLLENQFSLTHVQPLVELCMTARLKLLSDFVDCGVERVALLAHRINWKQDILDRAQQTKTILPDYYENEICECLTRTRDALSISGYPGEACLFSRERFRDTIIDLFVHLITSIKICFDRLFIRQRPQQLAQEPGQKKGNNEITTKKLLIAVGDIEFIIAKTLNNVGKKMQECGVKHVDQIQEKSRAKLSAFRTKMINDCIAMMSSAFEPLIASATYEYLPDDDDISDYAKEMILCSVLQQAELELYAPQLAIECLQQTVSNALDALLLHFSRLNQDTSPLIVTQIVIDLTGLEEALSTYATLAIRVQINTYRAGLVGRFDNQRLQQCLKNMRTTMRMALQSLEQHAENLGDDSHNTSNI.

Positions 1-11 (MEENAQARERL) are enriched in basic and acidic residues. The disordered stretch occupies residues 1–27 (MEENAQARERLPPTVTGLSPTEGVPGT). An IPT/TIG domain is found at 13-98 (PTVTGLSPTE…GSSNVKFRVF (86 aa)). 2 coiled-coil regions span residues 178–206 (ADATIEDLRIAIKNMELSKQNEAKRSEEM) and 846–874 (NQRLQQCLKNMRTTMRMALQSLEQHAENL).

The protein belongs to the SEC5 family. In terms of assembly, the exocyst complex is composed of sec-3/exoc1, sec-5/exoc2, sec-6/exoc3, sec-8/exoc4, sec-10/exoc5, sec-15/exoc6, exo-70/exoc7 and exo-84/exoc8.

Component of the exocyst complex involved in the docking of exocytic vesicles with fusion sites on the plasma membrane. The protein is Exocyst complex component 2 (sec-5) of Caenorhabditis elegans.